The primary structure comprises 195 residues: Holliday junction branch migration complex subunit RuvA (195 aa).

Residues 1–64 (MIASIRGVIQ…EDALTLYGFS (64 aa)) are domain I. The tract at residues 65-139 (DNAQRSLFEQ…GKIDFRQLAA (75 aa)) is domain II. The interval 139-143 (ASGST) is flexible linker. Residues 144–195 (SVSALDRELSEILVSLGYSAAEAAAAIASLPSDAPPTLEERLRLALRYFGSA) form a domain III region.

This sequence belongs to the RuvA family. Homotetramer. Forms an RuvA(8)-RuvB(12)-Holliday junction (HJ) complex. HJ DNA is sandwiched between 2 RuvA tetramers; dsDNA enters through RuvA and exits via RuvB. An RuvB hexamer assembles on each DNA strand where it exits the tetramer. Each RuvB hexamer is contacted by two RuvA subunits (via domain III) on 2 adjacent RuvB subunits; this complex drives branch migration. In the full resolvosome a probable DNA-RuvA(4)-RuvB(12)-RuvC(2) complex forms which resolves the HJ.

The protein localises to the cytoplasm. Its function is as follows. The RuvA-RuvB-RuvC complex processes Holliday junction (HJ) DNA during genetic recombination and DNA repair, while the RuvA-RuvB complex plays an important role in the rescue of blocked DNA replication forks via replication fork reversal (RFR). RuvA specifically binds to HJ cruciform DNA, conferring on it an open structure. The RuvB hexamer acts as an ATP-dependent pump, pulling dsDNA into and through the RuvAB complex. HJ branch migration allows RuvC to scan DNA until it finds its consensus sequence, where it cleaves and resolves the cruciform DNA. This chain is Holliday junction branch migration complex subunit RuvA, found in Chloroflexus aggregans (strain MD-66 / DSM 9485).